Consider the following 312-residue polypeptide: Ribose-phosphate pyrophosphokinase (312 aa).

Residues 34 to 36 and 93 to 94 contribute to the ATP site; these read DGE and RQ. Mg(2+)-binding residues include H128 and D167. Residue K191 is part of the active site. Residues R193 and D217 each coordinate D-ribose 5-phosphate.

The protein belongs to the ribose-phosphate pyrophosphokinase family. Class I subfamily. In terms of assembly, homohexamer. The cofactor is Mg(2+).

The protein resides in the cytoplasm. The enzyme catalyses D-ribose 5-phosphate + ATP = 5-phospho-alpha-D-ribose 1-diphosphate + AMP + H(+). It participates in metabolic intermediate biosynthesis; 5-phospho-alpha-D-ribose 1-diphosphate biosynthesis; 5-phospho-alpha-D-ribose 1-diphosphate from D-ribose 5-phosphate (route I): step 1/1. Functionally, involved in the biosynthesis of the central metabolite phospho-alpha-D-ribosyl-1-pyrophosphate (PRPP) via the transfer of pyrophosphoryl group from ATP to 1-hydroxyl of ribose-5-phosphate (Rib-5-P). The protein is Ribose-phosphate pyrophosphokinase of Baumannia cicadellinicola subsp. Homalodisca coagulata.